We begin with the raw amino-acid sequence, 289 residues long: Diaminopimelate epimerase (289 aa).

2 residues coordinate substrate: N11 and N78. The Proton donor role is filled by C87. Substrate contacts are provided by residues G88 to N89, N163, N199, and E217 to R218. C226 (proton acceptor) is an active-site residue. Residue G227–T228 participates in substrate binding.

This sequence belongs to the diaminopimelate epimerase family. As to quaternary structure, homodimer.

It is found in the cytoplasm. The enzyme catalyses (2S,6S)-2,6-diaminopimelate = meso-2,6-diaminopimelate. It participates in amino-acid biosynthesis; L-lysine biosynthesis via DAP pathway; DL-2,6-diaminopimelate from LL-2,6-diaminopimelate: step 1/1. Catalyzes the stereoinversion of LL-2,6-diaminopimelate (L,L-DAP) to meso-diaminopimelate (meso-DAP), a precursor of L-lysine and an essential component of the bacterial peptidoglycan. The chain is Diaminopimelate epimerase from Mycolicibacterium vanbaalenii (strain DSM 7251 / JCM 13017 / BCRC 16820 / KCTC 9966 / NRRL B-24157 / PYR-1) (Mycobacterium vanbaalenii).